The chain runs to 143 residues: Large ribosomal subunit protein uL11 (143 aa).

The protein belongs to the universal ribosomal protein uL11 family. As to quaternary structure, part of the ribosomal stalk of the 50S ribosomal subunit. Interacts with L10 and the large rRNA to form the base of the stalk. L10 forms an elongated spine to which L12 dimers bind in a sequential fashion forming a multimeric L10(L12)X complex. Post-translationally, one or more lysine residues are methylated.

In terms of biological role, forms part of the ribosomal stalk which helps the ribosome interact with GTP-bound translation factors. In Alkalilimnicola ehrlichii (strain ATCC BAA-1101 / DSM 17681 / MLHE-1), this protein is Large ribosomal subunit protein uL11.